The following is a 1412-amino-acid chain: DNA-directed RNA polymerase subunit beta' (1412 aa).

Zn(2+) contacts are provided by Cys70, Cys72, Cys85, and Cys88. The Mg(2+) site is built by Asp460, Asp462, and Asp464. Zn(2+) is bound by residues Cys819, Cys893, Cys900, and Cys903. A disordered region spans residues 1393 to 1412 (EAFEFGTPSAPAEEPQHPAE).

The protein belongs to the RNA polymerase beta' chain family. The RNAP catalytic core consists of 2 alpha, 1 beta, 1 beta' and 1 omega subunit. When a sigma factor is associated with the core the holoenzyme is formed, which can initiate transcription. It depends on Mg(2+) as a cofactor. The cofactor is Zn(2+).

The enzyme catalyses RNA(n) + a ribonucleoside 5'-triphosphate = RNA(n+1) + diphosphate. Functionally, DNA-dependent RNA polymerase catalyzes the transcription of DNA into RNA using the four ribonucleoside triphosphates as substrates. This chain is DNA-directed RNA polymerase subunit beta', found in Burkholderia pseudomallei (strain 1106a).